The primary structure comprises 573 residues: Poly(ribitol-phosphate) beta-N-acetylglucosaminyltransferase TarS (573 aa).

UDP-N-acetyl-alpha-D-glucosamine-binding positions include proline 9, aspartate 41, asparagine 68, arginine 76, 92–94 (DSD), arginine 127, and glutamate 178. Aspartate 94 contacts Mn(2+). The Proton acceptor role is filled by aspartate 179. UDP-N-acetyl-alpha-D-glucosamine-binding positions include arginine 207 and 211-213 (HMS).

The protein belongs to the glycosyltransferase 2 family. As to quaternary structure, homotrimer. The cofactor is Mn(2+).

The enzyme catalyses 4-O-[(D-ribitylphospho)(n)-di{(2R)-glycerylphospho}]-N-acetyl-beta-D-mannosaminyl-(1-&gt;4)-N-acetyl-alpha-D-glucosaminyl di-trans,octa-cis-undecaprenyl diphosphate + n UDP-N-acetyl-alpha-D-glucosamine = 4-O-([2-N-acetyl-beta-D-glucosaminyl-1-D-ribitylphospho](n)-di{[2R]-1-glycerylphospho})-N-acetyl-beta-D-mannosaminyl-(1-&gt;4)-N-acetyl-alpha-D-glucosaminyl di-trans,octa-cis-undecaprenyl diphosphate + n UDP + n H(+). Its pathway is cell wall biogenesis; poly(ribitol phosphate) teichoic acid biosynthesis. Its function is as follows. Attaches beta-O-GlcNAc (beta-O-N-acetyl-D-glucosamine) residues to the C4 position of poly(RboP)-wall teichoic acids (WTAs). Mediates beta-lactam resistance in methicillin resistant Staphylococcus aureus (MRSA) strains. The protein is Poly(ribitol-phosphate) beta-N-acetylglucosaminyltransferase TarS of Staphylococcus aureus (strain Mu50 / ATCC 700699).